The chain runs to 595 residues: Quinoprotein alcohol dehydrogenase PedH (595 aa).

Residues 1-27 form the signal peptide; that stretch reads MTRSPRRPLFAVSLVLSAMLLAGAAHA. Glutamine 87 serves as a coordination point for pyrroloquinoline quinone. Cysteine 131 and cysteine 132 form a disulfide bridge. Arginine 137, serine 181, glycine 197, and glycine 198 together coordinate pyrroloquinoline quinone. A Pr(3+)-binding site is contributed by glutamate 199. Residue tryptophan 263 coordinates pyrroloquinoline quinone. 3 residues coordinate Pr(3+): asparagine 281, aspartate 323, and aspartate 325. Residue aspartate 323 is the Proton acceptor of the active site. Arginine 350, asparagine 417, tryptophan 493, and alanine 557 together coordinate pyrroloquinoline quinone.

It belongs to the bacterial PQQ dehydrogenase family. Pr(3+) serves as cofactor. Requires Nd(3+) as cofactor. La(3+) is required as a cofactor. It depends on Ce(3+) as a cofactor. The cofactor is Sm(3+). Pyrroloquinoline quinone serves as cofactor. Post-translationally, the disulfide ring formed between the two adjacent cysteine residues Cys-131 and Cys-132 is essential for efficient electron transfer at pH 7 from PedH to its natural electron acceptor cytochrome c550.

The protein resides in the periplasm. The enzyme catalyses a primary alcohol + 2 Fe(III)-[cytochrome c] = an aldehyde + 2 Fe(II)-[cytochrome c] + 2 H(+). It catalyses the reaction ethanol + 2 Fe(III)-[cytochrome c] = acetaldehyde + 2 Fe(II)-[cytochrome c] + 2 H(+). It carries out the reaction butan-1-ol + 2 Fe(III)-[cytochrome c] = butanal + 2 Fe(II)-[cytochrome c] + 2 H(+). The catalysed reaction is butan-2-ol + 2 Fe(III)-[cytochrome c] = butan-2-one + 2 Fe(II)-[cytochrome c] + 2 H(+). The enzyme catalyses 2-phenylethanol + 2 Fe(III)-[cytochrome c] = 2-phenylacetaldehyde + 2 Fe(II)-[cytochrome c] + 2 H(+). It catalyses the reaction octan-1-ol + 2 Fe(III)-[cytochrome c] = octanal + 2 Fe(II)-[cytochrome c] + 2 H(+). It carries out the reaction hexan-1-ol + 2 Fe(III)-[cytochrome c] = hexanal + 2 Fe(II)-[cytochrome c] + 2 H(+). The catalysed reaction is cinnamyl alcohol + 2 Fe(III)-[cytochrome c] = cinnamaldehyde + 2 Fe(II)-[cytochrome c] + 2 H(+). The enzyme catalyses farnesol + 2 Fe(III)-[cytochrome c] = farnesal + 2 Fe(II)-[cytochrome c] + 2 H(+). It catalyses the reaction an aldehyde + 2 Fe(III)-[cytochrome c] + H2O = a carboxylate + 2 Fe(II)-[cytochrome c] + 3 H(+). It carries out the reaction acetaldehyde + 2 Fe(III)-[cytochrome c] + H2O = 2 Fe(II)-[cytochrome c] + acetate + 3 H(+). The catalysed reaction is butanal + 2 Fe(III)-[cytochrome c] + H2O = butanoate + 2 Fe(II)-[cytochrome c] + 3 H(+). The enzyme catalyses hexanal + 2 Fe(III)-[cytochrome c] + H2O = hexanoate + 2 Fe(II)-[cytochrome c] + 3 H(+). It catalyses the reaction octanal + 2 Fe(III)-[cytochrome c] + H2O = octanoate + 2 Fe(II)-[cytochrome c] + 3 H(+). Functionally, alcohol dehydrogenase that catalyzes the oxidation of a range of substrates, including linear and aromatic primary and secondary alcohols, as well as aldehydes, but only in the presence of lanthanides, allowing bacterial growth with a variety of volatile organic compounds (VOCs) as carbon and energy sources. Is also involved in the transcriptional regulation of pedE and pedH, most likely acting as a lanthanide sensory module. Uses a specific inducible cytochrome c550, encoded by the adjacent gene in the locus, as electron acceptor. The chain is Quinoprotein alcohol dehydrogenase PedH from Pseudomonas putida (strain ATCC 47054 / DSM 6125 / CFBP 8728 / NCIMB 11950 / KT2440).